A 207-amino-acid polypeptide reads, in one-letter code: Protein GrpE (207 aa).

Residues M1 to A31 form a disordered region.

Belongs to the GrpE family. Homodimer.

The protein resides in the cytoplasm. Its function is as follows. Participates actively in the response to hyperosmotic and heat shock by preventing the aggregation of stress-denatured proteins, in association with DnaK and GrpE. It is the nucleotide exchange factor for DnaK and may function as a thermosensor. Unfolded proteins bind initially to DnaJ; upon interaction with the DnaJ-bound protein, DnaK hydrolyzes its bound ATP, resulting in the formation of a stable complex. GrpE releases ADP from DnaK; ATP binding to DnaK triggers the release of the substrate protein, thus completing the reaction cycle. Several rounds of ATP-dependent interactions between DnaJ, DnaK and GrpE are required for fully efficient folding. The protein is Protein GrpE of Synechococcus elongatus (strain ATCC 33912 / PCC 7942 / FACHB-805) (Anacystis nidulans R2).